A 219-amino-acid polypeptide reads, in one-letter code: Transmembrane protein 179B (219 aa).

The next 4 membrane-spanning stretches (helical) occupy residues 9 to 29, 65 to 85, 96 to 116, and 167 to 187; these read VELALFAAAFLCGAVAAAAMT, FVAGASGLLALYCLLLLLFWI, GAIGLRIALAISAIAVFLVLV, and TSSWVNLVLWCVVLVLQVVQW. The interval 198-219 is disordered; that stretch reads ERGDPEWSSETDALVGSRLSHS. Phosphoserine is present on residues Ser-206 and Ser-214.

The protein belongs to the TMEM179 family.

It is found in the membrane. The protein is Transmembrane protein 179B (TMEM179B) of Homo sapiens (Human).